The sequence spans 314 residues: Secreted frizzled-related protein 1 (314 aa).

An N-terminal signal peptide occupies residues 1–31; it reads MGVGRSEGGRRGAALGVLLALGVALLAVGSA. An FZ domain is found at 53–169; the sequence is TKPHQCVAIP…FPQDYVCIAM (117 aa). 5 disulfides stabilise this stretch: Cys-58/Cys-121, Cys-68/Cys-114, Cys-105/Cys-140, Cys-129/Cys-166, and Cys-133/Cys-157. Asn-173 carries N-linked (GlcNAc...) asparagine glycosylation. Cystine bridges form between Cys-186–Cys-256, Cys-189–Cys-258, and Cys-203–Cys-306. One can recognise an NTR domain in the interval 186 to 306; the sequence is CPPCDNEMKS…FMKKVKAPDC (121 aa).

This sequence belongs to the secreted frizzled-related protein (sFRP) family.

The protein resides in the secreted. Soluble frizzled-related proteins (sFRPS) function as modulators of Wnt signaling through direct interaction with Wnts. They have a role in regulating cell growth and differentiation in specific cell types. In Gallus gallus (Chicken), this protein is Secreted frizzled-related protein 1 (SFRP1).